The sequence spans 204 residues: Lipoprotein signal peptidase (204 aa).

The interval 1–42 (MAEAERIIGTPDIPDAAGEGQERPDADPEREQQEQEQAPERT) is disordered. Positions 20 to 42 (GQERPDADPEREQQEQEQAPERT) are enriched in basic and acidic residues. Transmembrane regions (helical) follow at residues 50–70 (VLFA…MLVV), 100–120 (FGEA…VVIA), and 126–146 (LHSL…LGNL). Active-site residues include aspartate 163 and aspartate 177. A helical membrane pass occupies residues 170–190 (FAVFNLADSAIVCGGILIVIL).

Belongs to the peptidase A8 family.

Its subcellular location is the cell membrane. It catalyses the reaction Release of signal peptides from bacterial membrane prolipoproteins. Hydrolyzes -Xaa-Yaa-Zaa-|-(S,diacylglyceryl)Cys-, in which Xaa is hydrophobic (preferably Leu), and Yaa (Ala or Ser) and Zaa (Gly or Ala) have small, neutral side chains.. The protein operates within protein modification; lipoprotein biosynthesis (signal peptide cleavage). In terms of biological role, this protein specifically catalyzes the removal of signal peptides from prolipoproteins. This Streptomyces coelicolor (strain ATCC BAA-471 / A3(2) / M145) protein is Lipoprotein signal peptidase.